The chain runs to 119 residues: Holo-[acyl-carrier-protein] synthase (119 aa).

Positions 6 and 51 each coordinate Mg(2+).

This sequence belongs to the P-Pant transferase superfamily. AcpS family. It depends on Mg(2+) as a cofactor.

Its subcellular location is the cytoplasm. The catalysed reaction is apo-[ACP] + CoA = holo-[ACP] + adenosine 3',5'-bisphosphate + H(+). In terms of biological role, transfers the 4'-phosphopantetheine moiety from coenzyme A to a Ser of acyl-carrier-protein. This Sulfurovum sp. (strain NBC37-1) protein is Holo-[acyl-carrier-protein] synthase.